The primary structure comprises 514 residues: Cobyric acid synthase (514 aa).

The region spanning 249–448 (LIDIAVIKLP…VHGVFDNDEI (200 aa)) is the GATase cobBQ-type domain. The Nucleophile role is filled by Cys330. The active site involves His440.

The protein belongs to the CobB/CobQ family. CobQ subfamily.

It participates in cofactor biosynthesis; adenosylcobalamin biosynthesis. Catalyzes amidations at positions B, D, E, and G on adenosylcobyrinic A,C-diamide. NH(2) groups are provided by glutamine, and one molecule of ATP is hydrogenolyzed for each amidation. The sequence is that of Cobyric acid synthase from Ruminiclostridium cellulolyticum (strain ATCC 35319 / DSM 5812 / JCM 6584 / H10) (Clostridium cellulolyticum).